The sequence spans 282 residues: 3-methyl-2-oxobutanoate hydroxymethyltransferase (282 aa).

Mg(2+)-binding residues include Asp-44 and Asp-83. 3-methyl-2-oxobutanoate is bound by residues 44-45 (DS), Asp-83, and Lys-113. Glu-115 contacts Mg(2+). The active-site Proton acceptor is the Glu-182.

The protein belongs to the PanB family. In terms of assembly, homodecamer; pentamer of dimers. Mg(2+) serves as cofactor.

Its subcellular location is the cytoplasm. It catalyses the reaction 3-methyl-2-oxobutanoate + (6R)-5,10-methylene-5,6,7,8-tetrahydrofolate + H2O = 2-dehydropantoate + (6S)-5,6,7,8-tetrahydrofolate. The protein operates within cofactor biosynthesis; (R)-pantothenate biosynthesis; (R)-pantoate from 3-methyl-2-oxobutanoate: step 1/2. Its function is as follows. Catalyzes the reversible reaction in which hydroxymethyl group from 5,10-methylenetetrahydrofolate is transferred onto alpha-ketoisovalerate to form ketopantoate. The polypeptide is 3-methyl-2-oxobutanoate hydroxymethyltransferase (Dehalococcoides mccartyi (strain ATCC BAA-2266 / KCTC 15142 / 195) (Dehalococcoides ethenogenes (strain 195))).